The sequence spans 513 residues: Activin receptor type-2A (513 aa).

The first 19 residues, 1–19, serve as a signal peptide directing secretion; it reads MGAATKLAFAVFLISCSSG. At 20–139 the chain is on the extracellular side; sequence AILGRSETQE…VTPKPPLFNT (120 aa). Disulfide bonds link C30-C60, C50-C78, C85-C104, C91-C103, and C105-C110. N43 and N66 each carry an N-linked (GlcNAc...) asparagine glycan. A helical transmembrane segment spans residues 140–160; it reads LLYSLVPIMGIAVIVLFSFWM. At 161-513 the chain is on the cytoplasmic side; the sequence is YRHHKLAYPP…VDFPPKESSL (353 aa). The 294-residue stretch at 192 to 485 folds into the Protein kinase domain; the sequence is LQLLEIKARG…EERIIQMQKL (294 aa). ATP contacts are provided by residues 198–206 and K219; that span reads KARGRFGCV. The active-site Proton acceptor is the D322.

The protein belongs to the protein kinase superfamily. TKL Ser/Thr protein kinase family. TGFB receptor subfamily. Mg(2+) serves as cofactor. Mn(2+) is required as a cofactor. In terms of tissue distribution, expressed in hen anterior pituitary during the ovulatory cycle and in the ovarian follicle.

It localises to the cell membrane. The enzyme catalyses L-threonyl-[receptor-protein] + ATP = O-phospho-L-threonyl-[receptor-protein] + ADP + H(+). It carries out the reaction L-seryl-[receptor-protein] + ATP = O-phospho-L-seryl-[receptor-protein] + ADP + H(+). On ligand binding, forms a receptor complex consisting of two type II and two type I transmembrane serine/threonine kinases. Type II receptors phosphorylate and activate type I receptors which autophosphorylate, then bind and activate SMAD transcriptional regulators. Receptor for activin A, activin B and inhibin A. May modulate neuropeptide expression in dorsal root ganglia (DRG) neurons and ovarian follicle development. The sequence is that of Activin receptor type-2A (ACVR2A) from Gallus gallus (Chicken).